Here is a 337-residue protein sequence, read N- to C-terminus: Visual pigment-like receptor peropsin (337 aa).

Topologically, residues 1-26 (MLRNNLGNSSDSKNEDGSVFSQTEHN) are extracellular. The N-linked (GlcNAc...) asparagine glycan is linked to asparagine 8. The helical transmembrane segment at 27–49 (IVATYLIMAGMISIISNIIVLGI) threads the bilayer. The Cytoplasmic portion of the chain corresponds to 50–61 (FIKYKELRTPTN). Residues 62-87 (AIIINLAVTDIGVSSIGYPMSAASDL) traverse the membrane as a helical segment. Residues 88 to 101 (YGSWKFGYAGCQVY) are Extracellular-facing. A disulfide bridge connects residues cysteine 98 and cysteine 175. A helical transmembrane segment spans residues 102–121 (AGLNIFFGMASIGLLTVVAV). Over 122-140 (DRYLTICLPDVGRRMTTNT) the chain is Cytoplasmic. A helical transmembrane segment spans residues 141-164 (YIGLILGAWINGLFWALMPIIGWA). At 165–188 (SYAPDPTGATCTINWRKNDRSFVS) the chain is on the extracellular side. The chain crosses the membrane as a helical span at residues 189–212 (YTMTVIAINFIVPLTVMFYCYYHV). Over 213–240 (TLSIKHHTTSDCTESLNRDWSDQIDVTK) the chain is Cytoplasmic. Residues 241–264 (MSVIMICMFLVAWSPYSIVCLWAS) form a helical membrane-spanning segment. The Extracellular segment spans residues 265-272 (FGDPKKIP). The chain crosses the membrane as a helical span at residues 273–297 (PPMAIIAPLFAKSSTFYNPCIYVVA). Position 284 is an N6-(retinylidene)lysine (lysine 284). The Cytoplasmic portion of the chain corresponds to 298-337 (NKKFRRAMLAMFKCQTHQTMPVTSILPMDVSQNPLASGRI).

The protein belongs to the G-protein coupled receptor 1 family. Opsin subfamily. In terms of tissue distribution, found only in the eye, where it is localized to the retinal pigment epithelium (RPE). In the RPE, it is localized to the microvilli that surround the photoreceptor outer segments.

It is found in the membrane. Its function is as follows. May play a role in rpe physiology either by detecting light directly or by monitoring the concentration of retinoids or other photoreceptor-derived compounds. The chain is Visual pigment-like receptor peropsin (RRH) from Homo sapiens (Human).